The following is a 97-amino-acid chain: Co-chaperonin GroES (97 aa).

It belongs to the GroES chaperonin family. As to quaternary structure, heptamer of 7 subunits arranged in a ring. Interacts with the chaperonin GroEL.

Its subcellular location is the cytoplasm. Together with the chaperonin GroEL, plays an essential role in assisting protein folding. The GroEL-GroES system forms a nano-cage that allows encapsulation of the non-native substrate proteins and provides a physical environment optimized to promote and accelerate protein folding. GroES binds to the apical surface of the GroEL ring, thereby capping the opening of the GroEL channel. This Photorhabdus laumondii subsp. laumondii (strain DSM 15139 / CIP 105565 / TT01) (Photorhabdus luminescens subsp. laumondii) protein is Co-chaperonin GroES.